The chain runs to 647 residues: DNA mismatch repair protein MutL (647 aa).

The segment covering Ser-387 to Glu-400 has biased composition (basic and acidic residues). A disordered region spans residues Ser-387–Lys-412.

The protein belongs to the DNA mismatch repair MutL/HexB family.

In terms of biological role, this protein is involved in the repair of mismatches in DNA. It is required for dam-dependent methyl-directed DNA mismatch repair. May act as a 'molecular matchmaker', a protein that promotes the formation of a stable complex between two or more DNA-binding proteins in an ATP-dependent manner without itself being part of a final effector complex. The chain is DNA mismatch repair protein MutL from Streptococcus sanguinis (strain SK36).